The sequence spans 219 residues: Cytidylate kinase (219 aa).

Gly-10–Thr-18 provides a ligand contact to ATP.

This sequence belongs to the cytidylate kinase family. Type 1 subfamily.

It is found in the cytoplasm. The enzyme catalyses CMP + ATP = CDP + ADP. The catalysed reaction is dCMP + ATP = dCDP + ADP. The polypeptide is Cytidylate kinase (Staphylococcus aureus (strain JH9)).